Consider the following 728-residue polypeptide: Elongation factor 2 (728 aa).

A tr-type G domain is found at 18-258 (KFIRNIGIVA…MVIRHLPSPI (241 aa)). Residues 27 to 34 (AHIDHGKT), 93 to 97 (DTPGH), and 147 to 150 (NKVD) contribute to the GTP site. His594 is subject to Diphthamide.

This sequence belongs to the TRAFAC class translation factor GTPase superfamily. Classic translation factor GTPase family. EF-G/EF-2 subfamily.

The protein resides in the cytoplasm. Its function is as follows. Catalyzes the GTP-dependent ribosomal translocation step during translation elongation. During this step, the ribosome changes from the pre-translocational (PRE) to the post-translocational (POST) state as the newly formed A-site-bound peptidyl-tRNA and P-site-bound deacylated tRNA move to the P and E sites, respectively. Catalyzes the coordinated movement of the two tRNA molecules, the mRNA and conformational changes in the ribosome. This Archaeoglobus fulgidus (strain ATCC 49558 / DSM 4304 / JCM 9628 / NBRC 100126 / VC-16) protein is Elongation factor 2 (fusA).